Reading from the N-terminus, the 308-residue chain is tRNA-cytidine(32) 2-sulfurtransferase (308 aa).

The short motif at 39-44 (SGGKDS) is the PP-loop motif element. Residues cysteine 114, cysteine 117, and cysteine 205 each coordinate [4Fe-4S] cluster.

The protein belongs to the TtcA family. In terms of assembly, homodimer. The cofactor is Mg(2+). [4Fe-4S] cluster serves as cofactor.

The protein localises to the cytoplasm. It catalyses the reaction cytidine(32) in tRNA + S-sulfanyl-L-cysteinyl-[cysteine desulfurase] + AH2 + ATP = 2-thiocytidine(32) in tRNA + L-cysteinyl-[cysteine desulfurase] + A + AMP + diphosphate + H(+). The protein operates within tRNA modification. Catalyzes the ATP-dependent 2-thiolation of cytidine in position 32 of tRNA, to form 2-thiocytidine (s(2)C32). The sulfur atoms are provided by the cysteine/cysteine desulfurase (IscS) system. This chain is tRNA-cytidine(32) 2-sulfurtransferase, found in Cupriavidus taiwanensis (strain DSM 17343 / BCRC 17206 / CCUG 44338 / CIP 107171 / LMG 19424 / R1) (Ralstonia taiwanensis (strain LMG 19424)).